Reading from the N-terminus, the 257-residue chain is Acetylglutamate kinase (257 aa).

Residues 43–44 (GG), R65, and N157 contribute to the substrate site. Residues 180–185 (DVSGIL) and 208–210 (IIT) contribute to the ATP site.

It belongs to the acetylglutamate kinase family. ArgB subfamily. In terms of assembly, homodimer.

It localises to the cytoplasm. The enzyme catalyses N-acetyl-L-glutamate + ATP = N-acetyl-L-glutamyl 5-phosphate + ADP. The protein operates within amino-acid biosynthesis; L-arginine biosynthesis; N(2)-acetyl-L-ornithine from L-glutamate: step 2/4. Catalyzes the ATP-dependent phosphorylation of N-acetyl-L-glutamate. The polypeptide is Acetylglutamate kinase (Klebsiella pneumoniae (strain 342)).